Reading from the N-terminus, the 197-residue chain is Small ribosomal subunit protein uS4B (197 aa).

In terms of domain architecture, S4 RNA-binding spans 88–150 (SRLDNMVYRM…SRKTEMFVNN (63 aa)).

The protein belongs to the universal ribosomal protein uS4 family. As to quaternary structure, part of the 30S ribosomal subunit. Contacts protein S5. The interaction surface between S4 and S5 is involved in control of translational fidelity.

Functionally, one of the primary rRNA binding proteins, it binds directly to 16S rRNA where it nucleates assembly of the body of the 30S subunit. In terms of biological role, with S5 and S12 plays an important role in translational accuracy. In Clostridium perfringens (strain 13 / Type A), this protein is Small ribosomal subunit protein uS4B (rpsD2).